Reading from the N-terminus, the 365-residue chain is NADH-quinone oxidoreductase subunit H (365 aa).

8 consecutive transmembrane segments (helical) span residues 27 to 47 (LLLI…LTFA), 99 to 119 (FLFL…WAVV), 133 to 153 (ALLY…IAGW), 168 to 188 (AAQV…VLMM), 206 to 226 (FLNW…ISGV), 268 to 288 (ILVA…PVDI), 294 to 314 (IPGV…FLWF), and 329 to 349 (LGWK…GAVM).

Belongs to the complex I subunit 1 family. As to quaternary structure, NDH-1 is composed of 14 different subunits. Subunits NuoA, H, J, K, L, M, N constitute the membrane sector of the complex.

The protein localises to the cell inner membrane. It carries out the reaction a quinone + NADH + 5 H(+)(in) = a quinol + NAD(+) + 4 H(+)(out). Functionally, NDH-1 shuttles electrons from NADH, via FMN and iron-sulfur (Fe-S) centers, to quinones in the respiratory chain. The immediate electron acceptor for the enzyme in this species is believed to be ubiquinone. Couples the redox reaction to proton translocation (for every two electrons transferred, four hydrogen ions are translocated across the cytoplasmic membrane), and thus conserves the redox energy in a proton gradient. This subunit may bind ubiquinone. The protein is NADH-quinone oxidoreductase subunit H of Nitrosomonas eutropha (strain DSM 101675 / C91 / Nm57).